A 100-amino-acid chain; its full sequence is Small ribosomal subunit protein uS14c (100 aa).

This sequence belongs to the universal ribosomal protein uS14 family. Part of the 30S ribosomal subunit.

The protein resides in the plastid. It localises to the chloroplast. Binds 16S rRNA, required for the assembly of 30S particles. The sequence is that of Small ribosomal subunit protein uS14c from Chara vulgaris (Common stonewort).